A 486-amino-acid chain; its full sequence is Hematopoietic lineage cell-specific protein (486 aa).

The segment at 27–66 is involved in HAX-1 binding; it reads FVNDISEKEQRWGAKTIEGSGRTEHINIHQLRNKVSEEHD. Residue lysine 41 is modified to N6-acetyllysine. Cortactin repeat units follow at residues 79 to 115, 116 to 152, and 153 to 189; these read ASHG…SQTD, AAKG…SQKD, and YSRG…SQRD. Residue lysine 123 is modified to N6-acetyllysine. Tyrosine 140 carries the post-translational modification Phosphotyrosine. A Cortactin 4; truncated repeat occupies 190-212; that stretch reads YAKGFGGQYGIQKDRVDKSAVGF. The residue at position 192 (lysine 192) is an N6-acetyllysine. Position 198 is a phosphotyrosine (tyrosine 198). Residue tyrosine 222 is modified to Phosphotyrosine; by FGR. Lysine 241 carries the post-translational modification N6-acetyllysine. A compositionally biased stretch (basic and acidic residues) spans 243–276; that stretch reads ESMAEEKRKREEEEKAQQVARRQQERKAVTKRSP. Residues 243-419 form a disordered region; sequence ESMAEEKRKR…SALAGSSGCP (177 aa). Position 275 is a phosphoserine (serine 275). Position 308 is a phosphothreonine (threonine 308). Over residues 315–324 the composition is skewed to basic and acidic residues; that stretch reads EPVRTSREHP. Acidic residues-rich tracts occupy residues 353–383 and 390–405; these read QVEE…DVEE and EDEP…EPED. Phosphotyrosine; by SYK and FES occurs at positions 378 and 397. Low complexity predominate over residues 406 to 419; that stretch reads SSFSSALAGSSGCP. Residues 428-486 enclose the SH3 domain; sequence ALGISAVAVYDYQGEGSDELSFDPDDVITDIEMVDEGWWRGRCHGHFGLFPANYVKLLE.

Associates with the SH2 and SH3 domains of LCK. Binding to he LCK SH3 domain occurs constitutively, while binding to the LCK SH2 domain occurs only upon TCR stimulation. A similar binding pattern was observed with LYN, but not with FYN in which the FYN SH2 region associates upon TCR stimulation but the FYN SH3 region does not associate regardless of TCR stimulation. Directly associates with HAX1, through binding to its C-terminal region. Interacts with HS1BP3. Interacts with FES/FPS. Interacts (via SH2 domain) with FGR. Forms a multiprotein complex with LYN and ANKRD54. In terms of processing, phosphorylated by FES. Phosphorylated by LYN, FYN and FGR after cross-linking of surface IgM on B-cells. Phosphorylation by LYN, FYN and FGR requires prior phosphorylation by SYK or FES. Expressed only in tissues and cells of hematopoietic origin.

The protein resides in the membrane. It localises to the cytoplasm. Its subcellular location is the mitochondrion. Its function is as follows. Substrate of the antigen receptor-coupled tyrosine kinase. Plays a role in antigen receptor signaling for both clonal expansion and deletion in lymphoid cells. May also be involved in the regulation of gene expression. This is Hematopoietic lineage cell-specific protein (HCLS1) from Homo sapiens (Human).